Reading from the N-terminus, the 394-residue chain is Mannosyl-3-phosphoglycerate synthase (394 aa).

This sequence belongs to the glycosyltransferase 2 family.

The protein resides in the cytoplasm. The catalysed reaction is (2R)-3-phosphoglycerate + GDP-alpha-D-mannose = 2-O-(alpha-D-mannosyl)-3-phosphoglycerate + GDP + H(+). It functions in the pathway carbohydrate biosynthesis; 2-(alpha-D-mannosyl)-D-glycerate biosynthesis; 2-(alpha-D-mannosyl)-D-glycerate from GDP-alpha-D-mannose (MPG route): step 1/2. Its function is as follows. Transfers a mannosyl group from GDP-mannose to phosphoglycerate to form mannosyl-3-phosphoglycerate (MPG). The protein is Mannosyl-3-phosphoglycerate synthase (mngA) of Pyrococcus abyssi (strain GE5 / Orsay).